Reading from the N-terminus, the 278-residue chain is Fe(II)/2-oxoglutarate-dependent dioxygenase nvfI (278 aa).

The protein belongs to the asaB hydroxylase/desaturase family.

It catalyses the reaction asnovolin A + 2-oxoglutarate + 2 O2 = fumigatonoid A + succinate + CO2. It participates in secondary metabolite biosynthesis; terpenoid biosynthesis. Fe(II)/2-oxoglutarate-dependent dioxygenase; part of the gene cluster that mediates the biosynthesis of novofumigatonin, a heavily oxygenated meroterpenoid containing a unique orthoester moiety. The first step of the pathway is the synthesis of 3,5-dimethylorsellinic acid (DMOA) by the polyketide synthase nvfA via condensation of one acetyl-CoA starter unit with 3 malonyl-CoA units and 2 methylations. DMOA is then converted to farnesyl-DMOA by the farnesyltransferase nvfB. Epoxydation by FAD-dependent monooxygenase nvfK, followed by a protonation-initiated cyclization catalyzed by the terpene cyclase nvfL leads to the production of asnavolin H. The short chain dehydrogenase nvfC then as a 3-OH dehydrogenase of asnovolin H to yield chemesin D. There are two branches to synthesize asnovolin A from chemesin D. In one branch, chemesin D undergoes Baeyer-Villiger oxidation by nvfH, methylation by nvfJ, and enoyl reduction by the nvfM D enoylreductase that reduces the double bond between C-5'and C-6', to form respectively asnovolin I, asnovolin K, and asnovolin A. In the other branch, the methylation precedes the Baeyer-Villiger oxidation and the enoyl reduction to yield asnovolin A via the asnovolin J intermediate. Asnovolin A is further converted to fumigatonoid A by the Fe(II)/2-oxoglutarate-dependent dioxygenase nvfI that catalyzes an endoperoxidation reaction. The alpha/beta hydrolase nvfD then acts as an epimerase that converts fumigatonoid A to its C-5' epimer, which then undergoes spontaneous or nvfD-catalyzed lactonization. The following step utilizes the ketoreductase nvfG to produce fumigatonoid B. The dioxygenase nvfE further converts fumigatonoid B into fumigatonoid C. Finally the Fe(II)/2-oxoglutarate-dependent dioxygenase nvfF catalyzes two rounds of oxidation to transform fumigatonoid C into the end product, novofumigatonin A. The chain is Fe(II)/2-oxoglutarate-dependent dioxygenase nvfI from Aspergillus novofumigatus (strain IBT 16806).